Consider the following 251-residue polypeptide: Flap endonuclease Xni (251 aa).

Aspartate 104 serves as a coordination point for Mg(2+). In terms of domain architecture, 5'-3' exonuclease spans 160-249 (VQPQQLPDYW…IDGNLQQLRL (90 aa)). K(+)-binding residues include leucine 171, alanine 172, proline 180, valine 182, and isoleucine 185. The interaction with DNA stretch occupies residues 184–189 (GIGPKS).

Belongs to the Xni family. The cofactor is Mg(2+). K(+) is required as a cofactor.

Functionally, has flap endonuclease activity. During DNA replication, flap endonucleases cleave the 5'-overhanging flap structure that is generated by displacement synthesis when DNA polymerase encounters the 5'-end of a downstream Okazaki fragment. The sequence is that of Flap endonuclease Xni from Escherichia coli O7:K1 (strain IAI39 / ExPEC).